The sequence spans 114 residues: T cell receptor beta variable 5-6 (114 aa).

The signal sequence occupies residues 1-21; the sequence is MGPGLLCWALLCLLGAGLVDA. The Ig-like domain maps to 22–114; the sequence is GVTQSPTHLI…SALYLCASSL (93 aa). Cysteines 42 and 110 form a disulfide. Residue N90 is glycosylated (N-linked (GlcNAc...) asparagine).

In terms of assembly, alpha-beta TR is a heterodimer composed of an alpha and beta chain; disulfide-linked. The alpha-beta TR is associated with the transmembrane signaling CD3 coreceptor proteins to form the TR-CD3 (TcR or TCR). The assembly of alpha-beta TR heterodimers with CD3 occurs in the endoplasmic reticulum where a single alpha-beta TR heterodimer associates with one CD3D-CD3E heterodimer, one CD3G-CD3E heterodimer and one CD247 homodimer forming a stable octameric structure. CD3D-CD3E and CD3G-CD3E heterodimers preferentially associate with TR alpha and TR beta chains, respectively. The association of the CD247 homodimer is the last step of TcR assembly in the endoplasmic reticulum and is required for transport to the cell surface.

The protein localises to the cell membrane. Its function is as follows. V region of the variable domain of T cell receptor (TR) beta chain that participates in the antigen recognition. Alpha-beta T cell receptors are antigen specific receptors which are essential to the immune response and are present on the cell surface of T lymphocytes. Recognize peptide-major histocompatibility (MH) (pMH) complexes that are displayed by antigen presenting cells (APC), a prerequisite for efficient T cell adaptive immunity against pathogens. Binding of alpha-beta TR to pMH complex initiates TR-CD3 clustering on the cell surface and intracellular activation of LCK that phosphorylates the ITAM motifs of CD3G, CD3D, CD3E and CD247 enabling the recruitment of ZAP70. In turn ZAP70 phosphorylates LAT, which recruits numerous signaling molecules to form the LAT signalosome. The LAT signalosome propagates signal branching to three major signaling pathways, the calcium, the mitogen-activated protein kinase (MAPK) kinase and the nuclear factor NF-kappa-B (NF-kB) pathways, leading to the mobilization of transcription factors that are critical for gene expression and essential for T cell growth and differentiation. The T cell repertoire is generated in the thymus, by V-(D)-J rearrangement. This repertoire is then shaped by intrathymic selection events to generate a peripheral T cell pool of self-MH restricted, non-autoaggressive T cells. Post-thymic interaction of alpha-beta TR with the pMH complexes shapes TR structural and functional avidity. The sequence is that of T cell receptor beta variable 5-6 from Homo sapiens (Human).